We begin with the raw amino-acid sequence, 337 residues long: Biotin synthase (337 aa).

The region spanning 52–281 (ADIQRASLLS…RSRVRLSAGR (230 aa)) is the Radical SAM core domain. Residues Cys67, Cys71, and Cys74 each contribute to the [4Fe-4S] cluster site. Residues Cys112, Cys144, Cys204, and Arg276 each coordinate [2Fe-2S] cluster.

The protein belongs to the radical SAM superfamily. Biotin synthase family. As to quaternary structure, homodimer. Requires [4Fe-4S] cluster as cofactor. [2Fe-2S] cluster serves as cofactor.

It carries out the reaction (4R,5S)-dethiobiotin + (sulfur carrier)-SH + 2 reduced [2Fe-2S]-[ferredoxin] + 2 S-adenosyl-L-methionine = (sulfur carrier)-H + biotin + 2 5'-deoxyadenosine + 2 L-methionine + 2 oxidized [2Fe-2S]-[ferredoxin]. It functions in the pathway cofactor biosynthesis; biotin biosynthesis; biotin from 7,8-diaminononanoate: step 2/2. Functionally, catalyzes the conversion of dethiobiotin (DTB) to biotin by the insertion of a sulfur atom into dethiobiotin via a radical-based mechanism. This Methylobacterium radiotolerans (strain ATCC 27329 / DSM 1819 / JCM 2831 / NBRC 15690 / NCIMB 10815 / 0-1) protein is Biotin synthase.